Consider the following 140-residue polypeptide: Putative pre-16S rRNA nuclease (140 aa).

Belongs to the YqgF nuclease family.

It is found in the cytoplasm. Could be a nuclease involved in processing of the 5'-end of pre-16S rRNA. This Actinobacillus succinogenes (strain ATCC 55618 / DSM 22257 / CCUG 43843 / 130Z) protein is Putative pre-16S rRNA nuclease.